Here is a 722-residue protein sequence, read N- to C-terminus: Polyribonucleotide nucleotidyltransferase (722 aa).

Mg(2+) contacts are provided by Asp486 and Asp492. Positions 553 to 612 (PKIVQLQIDIDKISLVIGSTGKTVKAITDEFEVKVQIEQNGKIILFGDDDFKMQKAKERI) constitute a KH domain. One can recognise an S1 motif domain in the interval 622–717 (GEIYEGTVKK…KFGKIDLEIV (96 aa)).

This sequence belongs to the polyribonucleotide nucleotidyltransferase family. Requires Mg(2+) as cofactor.

The protein localises to the cytoplasm. The catalysed reaction is RNA(n+1) + phosphate = RNA(n) + a ribonucleoside 5'-diphosphate. Its function is as follows. Involved in mRNA degradation. Catalyzes the phosphorolysis of single-stranded polyribonucleotides processively in the 3'- to 5'-direction. This is Polyribonucleotide nucleotidyltransferase from Borreliella burgdorferi (strain ZS7) (Borrelia burgdorferi).